The primary structure comprises 425 residues: Serine--tRNA ligase (425 aa).

An L-serine-binding site is contributed by 231–233; it reads TAE. 262 to 264 is an ATP binding site; that stretch reads RSE. Residue glutamate 285 coordinates L-serine. 349–352 provides a ligand contact to ATP; it reads EISS. Serine 385 serves as a coordination point for L-serine.

It belongs to the class-II aminoacyl-tRNA synthetase family. Type-1 seryl-tRNA synthetase subfamily. In terms of assembly, homodimer. The tRNA molecule binds across the dimer.

The protein resides in the cytoplasm. It carries out the reaction tRNA(Ser) + L-serine + ATP = L-seryl-tRNA(Ser) + AMP + diphosphate + H(+). The catalysed reaction is tRNA(Sec) + L-serine + ATP = L-seryl-tRNA(Sec) + AMP + diphosphate + H(+). It participates in aminoacyl-tRNA biosynthesis; selenocysteinyl-tRNA(Sec) biosynthesis; L-seryl-tRNA(Sec) from L-serine and tRNA(Sec): step 1/1. Its function is as follows. Catalyzes the attachment of serine to tRNA(Ser). Is also able to aminoacylate tRNA(Sec) with serine, to form the misacylated tRNA L-seryl-tRNA(Sec), which will be further converted into selenocysteinyl-tRNA(Sec). This Bartonella bacilliformis (strain ATCC 35685 / KC583 / Herrer 020/F12,63) protein is Serine--tRNA ligase.